A 398-amino-acid polypeptide reads, in one-letter code: Galactose-3-O-sulfotransferase 2 (398 aa).

Topologically, residues 1–11 (MLSALGGLQRC) are cytoplasmic. A helical; Signal-anchor for type II membrane protein membrane pass occupies residues 12-29 (FWAILLLALTVSLLAGFL). Residues 30-398 (HKDVRLLMPL…PPKNIPFLGA (369 aa)) are Lumenal-facing. N-linked (GlcNAc...) asparagine glycans are attached at residues Asn-77, Asn-133, Asn-180, Asn-288, Asn-330, and Asn-360.

Belongs to the galactose-3-O-sulfotransferase family.

The protein localises to the golgi apparatus. It is found in the golgi stack membrane. It functions in the pathway protein modification; carbohydrate sulfation. Strongly inhibited by Cu(2+) and Zn(2+). Its function is as follows. Transfers a sulfate group to the hydroxyl group at C3 of non-reducing beta-galactosyl residues. Acts both on type 1 (Gal-beta-1,3-GlcNAc) and type 2 (Gal-beta-1,4-GlcNAc) chains with similar efficiency. The chain is Galactose-3-O-sulfotransferase 2 (GAL3ST2) from Sus scrofa (Pig).